Consider the following 297-residue polypeptide: 2-phospho-L-lactate transferase (297 aa).

Asp-49 serves as a coordination point for 7,8-didemethyl-8-hydroxy-5-deazariboflavin.

This sequence belongs to the CofD family. Homodimer. Requires Mg(2+) as cofactor.

It carries out the reaction (2S)-lactyl-2-diphospho-5'-guanosine + 7,8-didemethyl-8-hydroxy-5-deazariboflavin = oxidized coenzyme F420-0 + GMP + H(+). It functions in the pathway cofactor biosynthesis; coenzyme F420 biosynthesis. Catalyzes the transfer of the 2-phospholactate moiety from (2S)-lactyl-2-diphospho-5'-guanosine to 7,8-didemethyl-8-hydroxy-5-deazariboflavin (FO) with the formation of oxidized coenzyme F420-0 and GMP. The sequence is that of 2-phospho-L-lactate transferase from Methanospirillum hungatei JF-1 (strain ATCC 27890 / DSM 864 / NBRC 100397 / JF-1).